We begin with the raw amino-acid sequence, 582 residues long: MHYKKSIIGIAVTATAIIAGCQVTHQIVKSQGTAQGKHGEVQVETTFKDGHIVAIDVLKQKENKVLAGAVFKDVKQAIIDNNSIEVDGIAGATVTSKALKEAVGKSIEAAGVTLVATASAKKSEALTPAEYTYDVVIIGSGGAGFSAGLEAIAAGRSAVIIEKMPIIGGNSLISGAEMNVAGSWVQKNMGITDSKELFISDTLKGGDFKGDPEMVKTMVDNAVGAAEWLRDYVKVEFYPDQLFQFGGHSVKRALIPKGHTGAEVISKFSIKADEVGLPIHTNTKAEKLIQDQTGRIVGVEAAHNGKTITYHAKRGVVIATGGFSSNMEMRKKYNPELDERYGSTGHAGGTGDGIVMAEKIHAAAKNMGYIQSYPICSPTSGAIALIADSRFFGAVLINQKGERFVEELERRDVISHAILAQPGRYTYVLWNQDIENVAHTVEMHQGELKEFTKDGLMYKVDTLEEAAKVFNIPEDKLLSTIKDVNHYAATGKDEAFNHRSGLVDLSKGPYWILKATPSVHHTMGGLVVDTRTRVLDEQGKVIPGLFAAGEVTGLTHGTNRLGGNAYTDIIVYGRIAGQEAAK.

Residues M1–G20 form the signal peptide. Residue C21 is the site of N-palmitoyl cysteine attachment. The S-diacylglycerol cysteine moiety is linked to residue C21. T93 is subject to FMN phosphoryl threonine. Residues A143, E162, N170, S171, G175, A176, A285, and D352 each contribute to the FAD site. Catalysis depends on R411, which acts as the Proton donor. FAD contacts are provided by H521, E550, and A565.

This sequence belongs to the FAD-dependent oxidoreductase 2 family. FRD/SDH subfamily. Requires FAD as cofactor. It depends on FMN as a cofactor.

The protein localises to the cell membrane. It carries out the reaction dihydrourocanate + A = urocanate + AH2. In terms of biological role, catalyzes the two-electron reduction of urocanate to dihydrourocanate (also named imidazole propionate or deamino-histidine). The physiological electron donor is unknown; it might be the membrane-bound tetraheme cytochrome c (CymA). Enables anaerobic growth with urocanate as a sole terminal electron acceptor, and thus can provide the cells with a niche where no other bacteria can compete and survive. Is unable to reduce cinnamate and other unsaturated organic acids such as acrylic, crotonic, fumaric and orotic acids. Has no fumarate reductase or succinate dehydrogenase activity. The protein is Urocanate reductase (urdA) of Shewanella oneidensis (strain ATCC 700550 / JCM 31522 / CIP 106686 / LMG 19005 / NCIMB 14063 / MR-1).